A 116-amino-acid polypeptide reads, in one-letter code: Large ribosomal subunit protein bL19 (116 aa).

The protein belongs to the bacterial ribosomal protein bL19 family.

In terms of biological role, this protein is located at the 30S-50S ribosomal subunit interface and may play a role in the structure and function of the aminoacyl-tRNA binding site. The protein is Large ribosomal subunit protein bL19 of Mycoplasmopsis agalactiae (strain NCTC 10123 / CIP 59.7 / PG2) (Mycoplasma agalactiae).